A 147-amino-acid polypeptide reads, in one-letter code: Small ribosomal subunit protein uS13 (147 aa).

Residues 115 to 147 are disordered; sequence SYKGRRHEAGLPVRGQRTKSTFRNSSSVGVKRS. A compositionally biased stretch (polar residues) spans 132-147; sequence TKSTFRNSSSVGVKRS.

The protein belongs to the universal ribosomal protein uS13 family. As to quaternary structure, part of the 30S ribosomal subunit. Forms a loose heterodimer with protein S19. Forms two bridges to the 50S subunit in the 70S ribosome.

Its function is as follows. Located at the top of the head of the 30S subunit, it contacts several helices of the 16S rRNA. In the 70S ribosome it contacts the 23S rRNA (bridge B1a) and protein L5 of the 50S subunit (bridge B1b), connecting the 2 subunits; these bridges are implicated in subunit movement. The sequence is that of Small ribosomal subunit protein uS13 from Methanobrevibacter smithii (strain ATCC 35061 / DSM 861 / OCM 144 / PS).